We begin with the raw amino-acid sequence, 397 residues long: Tryptophan synthase beta chain (397 aa).

At Lys91 the chain carries N6-(pyridoxal phosphate)lysine.

It belongs to the TrpB family. Tetramer of two alpha and two beta chains. It depends on pyridoxal 5'-phosphate as a cofactor.

It carries out the reaction (1S,2R)-1-C-(indol-3-yl)glycerol 3-phosphate + L-serine = D-glyceraldehyde 3-phosphate + L-tryptophan + H2O. The protein operates within amino-acid biosynthesis; L-tryptophan biosynthesis; L-tryptophan from chorismate: step 5/5. Functionally, the beta subunit is responsible for the synthesis of L-tryptophan from indole and L-serine. The protein is Tryptophan synthase beta chain of Bacillus thuringiensis (strain Al Hakam).